Reading from the N-terminus, the 591-residue chain is MEDIHHKHTQSVSRSDMLRLLAVSRGDQPADLIIDNVFLLDLINGGTLPGPILISGDSIAGVGPAYAGTAALERIDAGGAIAVPGFIDAHLHIESSMMTPIAFESVTLPLGVTTIVCDPHEIVNVMGEKGLTWFLRCAEGAQQNQFIQISSCVPALAGTDINGAEFPLTAMLPYREHPHVLGLAEMMNFPGVIAGDEPTLDKLDAFRHLTLDGHSPMLSGKALNAYLAAGVENCHETLALEEGREKLALGMALMIREGSAARNLDTLAPLISEFNSPQCMLCTDDRNPWEIAHEGHIDALIRRLIQRHHIAPHVAYRVASWSAARHFGLKRLGLIAPGKKADIVLLDNLEQVAIRQVFAGGKAIDAQQLLRSAAMRQLASCPPQHNTLRRAPLSAEDLTLPLTQDADYRAIQLIPNELITPARTVRWLGDGFDTPDVCRIAVMERYGQQRVPALGLLHNSGLSKGALAATVSHDSHNIVVIGHHPAEMALAVNQLIDDGGGLCVVADGQVVVHLPLPIAGLMSSRSAAEIADIIDALKQACRNCGMTLNEPFIQMAFLSLPVIPSLKLTSLGLYDVDHFRFTEVRIPEESA.

Belongs to the metallo-dependent hydrolases superfamily. Adenine deaminase family. Homodimer. Requires Mn(2+) as cofactor.

It carries out the reaction adenine + H2O + H(+) = hypoxanthine + NH4(+). This is Adenine deaminase from Edwardsiella ictaluri (strain 93-146).